A 437-amino-acid polypeptide reads, in one-letter code: Amino-acid acetyltransferase (437 aa).

The 141-residue stretch at 289 to 429 folds into the N-acetyltransferase domain; that stretch reads ENIRLATSFD…EHYNYQRMSK (141 aa).

It belongs to the acetyltransferase family. ArgA subfamily.

Its subcellular location is the cytoplasm. The catalysed reaction is L-glutamate + acetyl-CoA = N-acetyl-L-glutamate + CoA + H(+). It participates in amino-acid biosynthesis; L-arginine biosynthesis; N(2)-acetyl-L-ornithine from L-glutamate: step 1/4. The polypeptide is Amino-acid acetyltransferase (Actinobacillus pleuropneumoniae serotype 5b (strain L20)).